Consider the following 340-residue polypeptide: Phospho-N-acetylmuramoyl-pentapeptide-transferase (340 aa).

10 consecutive transmembrane segments (helical) span residues F5–N25, T50–T70, S73–I93, F113–D133, I147–S167, G178–S198, L218–Y238, I242–L262, I267–V287, and I318–V338.

Belongs to the glycosyltransferase 4 family. MraY subfamily. Requires Mg(2+) as cofactor.

It is found in the cell membrane. The enzyme catalyses UDP-N-acetyl-alpha-D-muramoyl-L-alanyl-gamma-D-glutamyl-meso-2,6-diaminopimeloyl-D-alanyl-D-alanine + di-trans,octa-cis-undecaprenyl phosphate = di-trans,octa-cis-undecaprenyl diphospho-N-acetyl-alpha-D-muramoyl-L-alanyl-D-glutamyl-meso-2,6-diaminopimeloyl-D-alanyl-D-alanine + UMP. It functions in the pathway cell wall biogenesis; peptidoglycan biosynthesis. In terms of biological role, catalyzes the initial step of the lipid cycle reactions in the biosynthesis of the cell wall peptidoglycan: transfers peptidoglycan precursor phospho-MurNAc-pentapeptide from UDP-MurNAc-pentapeptide onto the lipid carrier undecaprenyl phosphate, yielding undecaprenyl-pyrophosphoryl-MurNAc-pentapeptide, known as lipid I. The sequence is that of Phospho-N-acetylmuramoyl-pentapeptide-transferase from Buchnera aphidicola subsp. Baizongia pistaciae (strain Bp).